The sequence spans 122 residues: Large ribosomal subunit protein uL14c (122 aa).

This sequence belongs to the universal ribosomal protein uL14 family. As to quaternary structure, part of the 50S ribosomal subunit.

The protein resides in the plastid. Its subcellular location is the chloroplast. Its function is as follows. Binds to 23S rRNA. In Arabis hirsuta (Hairy rock-cress), this protein is Large ribosomal subunit protein uL14c.